The sequence spans 391 residues: MSVIKMTDLDLAGKRVFIRADLNVPVKDGKVASDARIRATIPTLKLALEKGAKVMVTSHLGRPTEGEFKPEDSLQPVVDYLNNAELGVPVRLVQNYLDGVDVQAGEIVVLENVRVNKGEKKNDPELGKKYAALCDVFVMDAFGTAHRAQASTYGVAEYAPVACAGPLLAAELDALGKALKEPQRPMLAIVGGSKVSTKLTVLDSLSKIADQLIVGGGIANTFIAAEGHNVGKSLYEEDLIPEAKRLAAATNIPVPVDVRVGTEFSESAPATEKSVTEVRADESIFDIGDKSAEELAKIIKSAKTILWNGPVGVFEFPNFRKGTEVVSNAIAEATANGAFSIAGGGDTLAAIDLFGIKDKISYISTGGGAFLEFVEGKVLPAVEILEKRANG.

Substrate is bound by residues 21–23 (DLN), Arg-36, 59–62 (HLGR), Arg-114, and Arg-147. ATP contacts are provided by residues Lys-198, Glu-315, and 344 to 347 (GGDT).

It belongs to the phosphoglycerate kinase family. As to quaternary structure, monomer.

The protein resides in the cytoplasm. The catalysed reaction is (2R)-3-phosphoglycerate + ATP = (2R)-3-phospho-glyceroyl phosphate + ADP. Its pathway is carbohydrate degradation; glycolysis; pyruvate from D-glyceraldehyde 3-phosphate: step 2/5. The polypeptide is Phosphoglycerate kinase (Actinobacillus succinogenes (strain ATCC 55618 / DSM 22257 / CCUG 43843 / 130Z)).